Reading from the N-terminus, the 481-residue chain is Thiol protease (481 aa).

In terms of domain architecture, Calpain catalytic spans 169 to 481 (DLREQALSST…ENFWYIAYMY (313 aa)). Residues C229, H406, and N426 contribute to the active site.

The protein belongs to the peptidase C2 family.

Inactive below 20 degrees Celsius and pH 6.0. Inhibited by divalent cations. Functionally, thiol protease. Probably an important virulence factor. This Porphyromonas gingivalis (strain ATCC BAA-308 / W83) protein is Thiol protease (tpr).